Consider the following 409-residue polypeptide: Inactive serine protease 35 (409 aa).

Residues 1–17 form the signal peptide; sequence MLLWLIFFTPGWTLIDG. N-linked (GlcNAc...) asparagine glycans are attached at residues asparagine 87 and asparagine 107. A Peptidase S1 domain is found at 120–404; the sequence is VYGTDSRFSI…ICLWIHGNDA (285 aa). The cysteines at positions 150 and 166 are disulfide-linked. The segment covering 188–203 has biased composition (basic residues); sequence RNKSGGKKRRGSKRSR. Residues 188–246 are disordered; sequence RNKSGGKKRRGSKRSRRETSGGDQREGPREHLQDRVKAGRRRKQSGGGQRVSEGRPSFR. Residues 204 to 224 show a composition bias toward basic and acidic residues; that stretch reads RETSGGDQREGPREHLQDRVK.

This sequence belongs to the peptidase S1 family.

Its subcellular location is the secreted. The polypeptide is Inactive serine protease 35 (PRSS35) (Macaca mulatta (Rhesus macaque)).